A 70-amino-acid chain; its full sequence is Probable U6 snRNA-associated Sm-like protein (70 aa).

Positions 3–70 (DPFCFLKMYL…ILFVGPRLLL (68 aa)) constitute a Sm domain.

This sequence belongs to the snRNP Sm proteins family.

Its subcellular location is the nucleus. Its function is as follows. Binds specifically to the 3'-terminal U-tract of U6 snRNA. This is Probable U6 snRNA-associated Sm-like protein from Encephalitozoon cuniculi (strain GB-M1) (Microsporidian parasite).